The sequence spans 176 residues: Large ribosomal subunit protein uL22 (176 aa).

The disordered stretch occupies residues 113–176 (VVESRPSKDQ…EISEAKGGSD (64 aa)). A compositionally biased stretch (low complexity) spans 136–152 (SKAAATAPAKKSSASKA). Over residues 159 to 176 (TKAESKTSEISEAKGGSD) the composition is skewed to basic and acidic residues.

It belongs to the universal ribosomal protein uL22 family. Part of the 50S ribosomal subunit.

Its function is as follows. This protein binds specifically to 23S rRNA; its binding is stimulated by other ribosomal proteins, e.g. L4, L17, and L20. It is important during the early stages of 50S assembly. It makes multiple contacts with different domains of the 23S rRNA in the assembled 50S subunit and ribosome. In terms of biological role, the globular domain of the protein is located near the polypeptide exit tunnel on the outside of the subunit, while an extended beta-hairpin is found that lines the wall of the exit tunnel in the center of the 70S ribosome. The protein is Large ribosomal subunit protein uL22 of Mycobacterium ulcerans (strain Agy99).